Here is a 452-residue protein sequence, read N- to C-terminus: Elongation factor Tu, mitochondrial (452 aa).

A mitochondrion-targeting transit peptide spans 1–43 (MAAATLLRATPLFSGLGAGPAPLLQGLLRPLKAQALPVLCRGL). Residues 55-251 (KPHVNVGTIG…AVDTYIPVPT (197 aa)) form the tr-type G domain. Residues 64–71 (GHVDHGKT) are G1. GTP contacts are provided by D67, G69, K70, T71, and T72. T71 is a binding site for Mg(2+). An N6-acetyllysine modification is found at K79. K88 carries the post-translational modification N6-acetyllysine; alternate. N6-succinyllysine; alternate is present on K88. Residues 105–109 (GITIN) are G2. Residues 126 to 129 (DCPG) are G3. Positions 181, 184, 219, 220, and 221 each coordinate GTP. The interval 181–184 (NKAD) is G4. A G5 region spans residues 219–221 (SAL). K234 carries the post-translational modification N6-succinyllysine. N6-acetyllysine is present on K256. T278 is modified (phosphothreonine). Residue K286 is modified to N6-succinyllysine. Position 312 is a phosphoserine (S312). K361 and K418 each carry N6-acetyllysine.

The protein belongs to the TRAFAC class translation factor GTPase superfamily. Classic translation factor GTPase family. EF-Tu/EF-1A subfamily. As to quaternary structure, interacts with NLRX1. Interacts with ATG16L1.

Its subcellular location is the mitochondrion. It catalyses the reaction GTP + H2O = GDP + phosphate + H(+). GTP hydrolase that promotes the GTP-dependent binding of aminoacyl-tRNA to the A-site of ribosomes during protein biosynthesis. Also plays a role in the regulation of autophagy and innate immunity. Recruits ATG5-ATG12 and NLRX1 at mitochondria and serves as a checkpoint of the RIGI-MAVS pathway. In turn, inhibits RLR-mediated type I interferon while promoting autophagy. This is Elongation factor Tu, mitochondrial (TUFM) from Bos taurus (Bovine).